Here is a 601-residue protein sequence, read N- to C-terminus: Glutamine--fructose-6-phosphate aminotransferase [isomerizing] (601 aa).

C2 acts as the Nucleophile; for GATase activity in catalysis. One can recognise a Glutamine amidotransferase type-2 domain in the interval 2–214 (CGITGYIGTD…NGDIAHLTET (213 aa)). SIS domains are found at residues 281–420 (STET…ARNA) and 453–591 (IGRE…IDKP). The active-site For Fru-6P isomerization activity is the K596.

In terms of assembly, homodimer.

The protein localises to the cytoplasm. It carries out the reaction D-fructose 6-phosphate + L-glutamine = D-glucosamine 6-phosphate + L-glutamate. Functionally, catalyzes the first step in hexosamine metabolism, converting fructose-6P into glucosamine-6P using glutamine as a nitrogen source. The protein is Glutamine--fructose-6-phosphate aminotransferase [isomerizing] of Halobacterium salinarum (strain ATCC 700922 / JCM 11081 / NRC-1) (Halobacterium halobium).